The sequence spans 206 residues: Protein GrpE (206 aa).

The segment covering 1 to 17 (MSNESIKAEQDLIHEGV) has biased composition (basic and acidic residues). Residues 1–20 (MSNESIKAEQDLIHEGVESE) form a disordered region.

This sequence belongs to the GrpE family. As to quaternary structure, homodimer.

Its subcellular location is the cytoplasm. Participates actively in the response to hyperosmotic and heat shock by preventing the aggregation of stress-denatured proteins, in association with DnaK and GrpE. It is the nucleotide exchange factor for DnaK and may function as a thermosensor. Unfolded proteins bind initially to DnaJ; upon interaction with the DnaJ-bound protein, DnaK hydrolyzes its bound ATP, resulting in the formation of a stable complex. GrpE releases ADP from DnaK; ATP binding to DnaK triggers the release of the substrate protein, thus completing the reaction cycle. Several rounds of ATP-dependent interactions between DnaJ, DnaK and GrpE are required for fully efficient folding. In Shewanella oneidensis (strain ATCC 700550 / JCM 31522 / CIP 106686 / LMG 19005 / NCIMB 14063 / MR-1), this protein is Protein GrpE.